The chain runs to 67 residues: Guanine nucleotide-binding protein G(I)/G(S)/G(O) subunit gamma-13 (67 aa).

Position 64 is a cysteine methyl ester (Cys64). A lipid anchor (S-farnesyl cysteine) is attached at Cys64. Residues 65 to 67 (TIL) constitute a propeptide, removed in mature form.

It belongs to the G protein gamma family. As to quaternary structure, g proteins are composed of 3 units, alpha, beta and gamma.

It is found in the cell membrane. In terms of biological role, guanine nucleotide-binding proteins (G proteins) are involved as a modulator or transducer in various transmembrane signaling systems. The beta and gamma chains are required for the GTPase activity, for replacement of GDP by GTP, and for G protein-effector interaction. The protein is Guanine nucleotide-binding protein G(I)/G(S)/G(O) subunit gamma-13 (Gng13) of Mus musculus (Mouse).